Reading from the N-terminus, the 144-residue chain is Nucleoside diphosphate kinase (144 aa).

The ATP site is built by Lys-11, Phe-59, Arg-87, Thr-93, Arg-104, and Asn-114. His-117 functions as the Pros-phosphohistidine intermediate in the catalytic mechanism.

This sequence belongs to the NDK family. In terms of assembly, homotetramer. Mg(2+) serves as cofactor.

The protein resides in the cytoplasm. It catalyses the reaction a 2'-deoxyribonucleoside 5'-diphosphate + ATP = a 2'-deoxyribonucleoside 5'-triphosphate + ADP. It carries out the reaction a ribonucleoside 5'-diphosphate + ATP = a ribonucleoside 5'-triphosphate + ADP. In terms of biological role, major role in the synthesis of nucleoside triphosphates other than ATP. The ATP gamma phosphate is transferred to the NDP beta phosphate via a ping-pong mechanism, using a phosphorylated active-site intermediate. This chain is Nucleoside diphosphate kinase, found in Vibrio atlanticus (strain LGP32) (Vibrio splendidus (strain Mel32)).